The primary structure comprises 281 residues: Fructose-bisphosphate aldolase class 1 (281 aa).

The Schiff-base intermediate with dihydroxyacetone-P role is filled by Lys-191.

The protein belongs to the DeoC/FbaB aldolase family. In terms of assembly, homooctamer.

The protein resides in the cytoplasm. The enzyme catalyses beta-D-fructose 1,6-bisphosphate = D-glyceraldehyde 3-phosphate + dihydroxyacetone phosphate. Activated by citrate. The polypeptide is Fructose-bisphosphate aldolase class 1 (fba) (Pyrococcus abyssi (strain GE5 / Orsay)).